We begin with the raw amino-acid sequence, 94 residues long: MLCSIYKSSKKEGTYLYIPKKDDFSQVPDTLMQMFGKPIPVMTIKLDGRKLAQVDIEKVKASLQNDGFFLQVPPPPENLLEKYKEQKAQQKNEQ.

The region spanning 1–84 (MLCSIYKSSK…PPENLLEKYK (84 aa)) is the YcgL domain.

The sequence is that of YcgL domain-containing protein VP0875 from Vibrio parahaemolyticus serotype O3:K6 (strain RIMD 2210633).